Reading from the N-terminus, the 462-residue chain is Siroheme synthase (462 aa).

Residues 1-203 (MEYLPLFANL…GKWEHAEKEI (203 aa)) form a precorrin-2 dehydrogenase /sirohydrochlorin ferrochelatase region. NAD(+) contacts are provided by residues 22–23 (NV) and 43–44 (DD). The residue at position 128 (Ser128) is a Phosphoserine. Residues 215–462 (GNVALVGAGP…NWFGKIIKEQ (248 aa)) form a uroporphyrinogen-III C-methyltransferase region. Position 224 (Pro224) interacts with S-adenosyl-L-methionine. Residue Asp247 is the Proton acceptor of the active site. Lys269 (proton donor) is an active-site residue. S-adenosyl-L-methionine-binding positions include 300-302 (GGD), Ile305, 330-331 (TA), Met383, and Gly412.

The protein in the N-terminal section; belongs to the precorrin-2 dehydrogenase / sirohydrochlorin ferrochelatase family. In the C-terminal section; belongs to the precorrin methyltransferase family.

It catalyses the reaction uroporphyrinogen III + 2 S-adenosyl-L-methionine = precorrin-2 + 2 S-adenosyl-L-homocysteine + H(+). The enzyme catalyses precorrin-2 + NAD(+) = sirohydrochlorin + NADH + 2 H(+). The catalysed reaction is siroheme + 2 H(+) = sirohydrochlorin + Fe(2+). Its pathway is cofactor biosynthesis; adenosylcobalamin biosynthesis; precorrin-2 from uroporphyrinogen III: step 1/1. It participates in cofactor biosynthesis; adenosylcobalamin biosynthesis; sirohydrochlorin from precorrin-2: step 1/1. It functions in the pathway porphyrin-containing compound metabolism; siroheme biosynthesis; precorrin-2 from uroporphyrinogen III: step 1/1. The protein operates within porphyrin-containing compound metabolism; siroheme biosynthesis; siroheme from sirohydrochlorin: step 1/1. Its pathway is porphyrin-containing compound metabolism; siroheme biosynthesis; sirohydrochlorin from precorrin-2: step 1/1. Its function is as follows. Multifunctional enzyme that catalyzes the SAM-dependent methylations of uroporphyrinogen III at position C-2 and C-7 to form precorrin-2 via precorrin-1. Then it catalyzes the NAD-dependent ring dehydrogenation of precorrin-2 to yield sirohydrochlorin. Finally, it catalyzes the ferrochelation of sirohydrochlorin to yield siroheme. This is Siroheme synthase from Baumannia cicadellinicola subsp. Homalodisca coagulata.